Here is a 170-residue protein sequence, read N- to C-terminus: Flavodoxin (170 aa).

In terms of domain architecture, Flavodoxin-like spans 4–165 (IGLFFGTQTG…RIQAWVAQLK (162 aa)).

The protein belongs to the flavodoxin family. Requires FMN as cofactor.

Functionally, low-potential electron donor to a number of redox enzymes. The polypeptide is Flavodoxin (isiB) (Picosynechococcus sp. (strain ATCC 27264 / PCC 7002 / PR-6) (Agmenellum quadruplicatum)).